We begin with the raw amino-acid sequence, 3195 residues long: Large tegument protein deneddylase (3195 aa).

The 233-residue stretch at 10 to 242 folds into the Peptidase C76 domain; sequence VAAASRSQFD…VEVISAALRA (233 aa). Active-site residues include C30, D173, and H175. 4 disordered regions span residues 287-374, 2407-2776, 2829-3068, and 3128-3147; these read RGTA…GALA, NPAH…DSNY, AGVG…AALD, and ASDLDDHQSDQPRESLAPLD. The span at 338–347 shows a compositional bias: basic residues; sequence KVKKPNKGKK. Positions 2470 to 2482 are enriched in basic and acidic residues; it reads KIERASGKNRKTE. Residues 2491–2503 show a composition bias toward low complexity; the sequence is AARGRAAAPPTET. Composition is skewed to basic and acidic residues over residues 2504–2527 and 2538–2562; these read KTTEKRQKCPPRESPLSRDERAPH and RPPRGDSDDDRHKHETPHGVSDKAA. Composition is skewed to basic residues over residues 2588–2615 and 2636–2648; these read PKTKPRRTSSGLRRKHQASASVHKHRTH and GRQRRSTLGGKKR. Basic and acidic residues-rich tracts occupy residues 2649 to 2672 and 2687 to 2696; these read SGTDRTAEFLKKATCVDKLEKFSR and ACDRLGERGN. Pro residues predominate over residues 2701 to 2712; sequence PRAPASSPPPPG. Over residues 2714-2723 the composition is skewed to basic and acidic residues; the sequence is QADHGIDQRE. 2 stretches are compositionally biased toward acidic residues: residues 2748–2768 and 2835–2844; these read DDGDPAEEEDARDVEEGEEDV and WSEEDEDAPA. Positions 2850-2864 are enriched in polar residues; the sequence is STNVEVATHGYTSDD. The span at 2869-2878 shows a compositional bias: basic and acidic residues; it reads DESKRARATR. Positions 2887-2903 are enriched in low complexity; it reads PASPLAPSTPSSLPTPA. The segment covering 2959 to 2981 has biased composition (basic and acidic residues); sequence DDARKKQENSSHERKDDGVRWEI. Over residues 2982–2994 the composition is skewed to acidic residues; the sequence is DLDSDQGDYSDAS. Composition is skewed to basic and acidic residues over residues 2995–3021, 3050–3062, and 3131–3140; these read DDCKIPDGPRVAPEKDIKNKQLEKSES, SDDKAGNRKDPKL, and LDDHQSDQPR.

It belongs to the herpesviridae large tegument protein family. Interacts with host CUL1 and CUL4A; these interactions inhibit the E3 ligase activity of cullins. Interacts with inner tegument protein. Interacts with capsid vertex specific component CVC2. Interacts with the major capsid protein/MCP.

The protein resides in the virion tegument. The protein localises to the host cytoplasm. Its subcellular location is the host nucleus. It carries out the reaction Thiol-dependent hydrolysis of ester, thioester, amide, peptide and isopeptide bonds formed by the C-terminal Gly of ubiquitin (a 76-residue protein attached to proteins as an intracellular targeting signal).. Its function is as follows. Large tegument protein that plays multiple roles in the viral cycle. During viral entry, remains associated with the capsid while most of the tegument is detached and participates in the capsid transport toward the host nucleus. Plays a role in the routing of the capsid at the nuclear pore complex and subsequent uncoating. Within the host nucleus, acts as a deneddylase and promotes the degradation of nuclear CRLs (cullin-RING ubiquitin ligases) and thereby stabilizes nuclear CRL substrates, while cytoplasmic CRLs remain unaffected. These modifications prevent host cell cycle S-phase progression and create a favorable environment allowing efficient viral genome replication. Participates later in the secondary envelopment of capsids. Indeed, plays a linker role for the association of the outer viral tegument to the capsids together with the inner tegument protein. In Amazona oratrix (yellow-headed parrot), this protein is Large tegument protein deneddylase (UL36).